We begin with the raw amino-acid sequence, 37 residues long: Large ribosomal subunit protein bL36 (37 aa).

The protein belongs to the bacterial ribosomal protein bL36 family.

The protein is Large ribosomal subunit protein bL36 of Metamycoplasma arthritidis (strain 158L3-1) (Mycoplasma arthritidis).